Here is a 392-residue protein sequence, read N- to C-terminus: ADP-ribosylhydrolase ARH1 (392 aa).

Residues S79, D80, and D81 each coordinate Mg(2+). Position 109 (K109) interacts with substrate. The interval 125 to 127 (IQT) is substrate. Residue G159 coordinates substrate. Substrate stretches follow at residues 192–194 (HNN), 309–311 (FSG), and 315–316 (SS). Mg(2+) is bound by residues D348, D350, and S351.

It belongs to the ADP-ribosylglycohydrolase family. Monomer. Mg(2+) serves as cofactor.

The catalysed reaction is N(omega)-(ADP-D-ribosyl)-L-arginyl-[protein] + H2O = ADP-D-ribose + L-arginyl-[protein]. Specifically acts as an arginine mono-ADP-ribosylhydrolase by mediating the removal of mono-ADP-ribose attached to arginine residues on proteins. This Dictyostelium discoideum (Social amoeba) protein is ADP-ribosylhydrolase ARH1 (adprh).